Reading from the N-terminus, the 257-residue chain is UPF0246 protein Sbal195_1149 (257 aa).

This sequence belongs to the UPF0246 family.

This chain is UPF0246 protein Sbal195_1149, found in Shewanella baltica (strain OS195).